Consider the following 1742-residue polypeptide: NACHT and WD repeat domain-containing protein 2 (1742 aa).

LRR repeat units lie at residues 386 to 410 (FYEY…GHIN), 677 to 698 (LEDV…TRPS), 724 to 747 (VKNV…LYLQ), 883 to 906 (YSQE…VTAF), and 925 to 953 (LPKL…SSMD). In terms of domain architecture, NACHT spans 410–737 (NPLIIYGGPC…TLLVWANRHL (328 aa)). WD repeat units follow at residues 963 to 1004 (LSSS…LLRQ), 1007 to 1046 (TAQS…LLSE), 1140 to 1179 (FSGG…SPQL), 1229 to 1271 (KHNE…ASLQ), 1272 to 1311 (EISG…AMSN), 1314 to 1353 (KTGK…IEAV), 1355 to 1394 (KHEG…NLFR), 1396 to 1434 (NGQR…RVCN), 1476 to 1516 (EDGT…ICRR), 1522 to 1564 (NFLK…VHAS), and 1614 to 1653 (SLYK…DAAL).

The chain is NACHT and WD repeat domain-containing protein 2 (NWD2) from Homo sapiens (Human).